Reading from the N-terminus, the 183-residue chain is Lipid droplet coating protein mpl1 (183 aa).

Belongs to the perilipin family.

The protein localises to the lipid droplet. Lipid droplet coating protein that regulates lipid metabolism, appressorial turgor pressure, and virulence. Appressorial turgor pressure is important for breaching the insect cuticle during infection. The protein is Lipid droplet coating protein mpl1 of Metarhizium robertsii (strain ARSEF 23 / ATCC MYA-3075) (Metarhizium anisopliae (strain ARSEF 23)).